Consider the following 461-residue polypeptide: Glyceraldehyde-3-phosphate dehydrogenase-like protein (461 aa).

Threonine 421 carries the phosphothreonine modification.

The protein belongs to the glyceraldehyde-3-phosphate dehydrogenase family.

This chain is Glyceraldehyde-3-phosphate dehydrogenase-like protein (gap2), found in Pseudomonas aeruginosa (strain UCBPP-PA14).